We begin with the raw amino-acid sequence, 225 residues long: Triosephosphate isomerase (225 aa).

9 to 11 (NMK) serves as a coordination point for substrate. Residue H93 is the Electrophile of the active site. Catalysis depends on E141, which acts as the Proton acceptor. Substrate is bound by residues I146, G181, and 202 to 203 (AS).

It belongs to the triosephosphate isomerase family. Homotetramer; dimer of dimers.

Its subcellular location is the cytoplasm. It catalyses the reaction D-glyceraldehyde 3-phosphate = dihydroxyacetone phosphate. Its pathway is carbohydrate biosynthesis; gluconeogenesis. It participates in carbohydrate degradation; glycolysis; D-glyceraldehyde 3-phosphate from glycerone phosphate: step 1/1. Its function is as follows. Involved in the gluconeogenesis. Catalyzes stereospecifically the conversion of dihydroxyacetone phosphate (DHAP) to D-glyceraldehyde-3-phosphate (G3P). The protein is Triosephosphate isomerase of Caldivirga maquilingensis (strain ATCC 700844 / DSM 13496 / JCM 10307 / IC-167).